A 426-amino-acid polypeptide reads, in one-letter code: MLDPALLRHQPADLAERLRTSRGFELDVSALESLEADRKRIQVRTQELQSLRNSRSKAIGQAKAKGEDVSAIMAEVAAFADELKASEVALDELREKIEAISMGIPNLPADDVPAGADENDNVEQSRWGTPRQFDFKVLDHVELGARNGWLDGETAAKLSGSRFTVLRGPIARLHRALAQFMVDLHTGEHGYEETNVPLLVNADSLRGTSQLPKFEDDLFKTAVGDSTRYLIPTSEVPLTNIVRDEIVDAERLPLRMTAHSMCFRAEAGSGGRDVRGMIRQHQFEKVELVSISRPEDSDAEHQRMTRCAEVVLEKLGLPYRKVLLCTGDMGFSAVKTYDLEVWLPSQETYREISSCSNCGDFQARRMQARWRNPATGKPELAHTLNGSGVAVGRAMIAVMENYQNADGSITVPEALRPYMGGLETIA.

T233 to E235 is an L-serine binding site. R264–E266 is an ATP binding site. L-serine is bound at residue E287. Residue E351–S354 coordinates ATP. S387 lines the L-serine pocket.

Belongs to the class-II aminoacyl-tRNA synthetase family. Type-1 seryl-tRNA synthetase subfamily. Homodimer. The tRNA molecule binds across the dimer.

The protein localises to the cytoplasm. The catalysed reaction is tRNA(Ser) + L-serine + ATP = L-seryl-tRNA(Ser) + AMP + diphosphate + H(+). It carries out the reaction tRNA(Sec) + L-serine + ATP = L-seryl-tRNA(Sec) + AMP + diphosphate + H(+). It participates in aminoacyl-tRNA biosynthesis; selenocysteinyl-tRNA(Sec) biosynthesis; L-seryl-tRNA(Sec) from L-serine and tRNA(Sec): step 1/1. Its function is as follows. Catalyzes the attachment of serine to tRNA(Ser). Is also able to aminoacylate tRNA(Sec) with serine, to form the misacylated tRNA L-seryl-tRNA(Sec), which will be further converted into selenocysteinyl-tRNA(Sec). This Stenotrophomonas maltophilia (strain K279a) protein is Serine--tRNA ligase.